The sequence spans 177 residues: MSRVGKYPVTVPAGVTITVKDNVVTAKGKLGEMTYTAAGEVETRLEDNLIWVKPLSETKHARQQWGTTRARINNLVRGVSEGFSRKLELVGVGYKAAAQGKVLKLSLGFSHDVDFPIPEDLKITTPAPNQIEISGVDKQRVGQIASEIRSYRSPEPYKGKGVKYAGEQILRKEGKKK.

It belongs to the universal ribosomal protein uL6 family. Part of the 50S ribosomal subunit.

In terms of biological role, this protein binds to the 23S rRNA, and is important in its secondary structure. It is located near the subunit interface in the base of the L7/L12 stalk, and near the tRNA binding site of the peptidyltransferase center. The chain is Large ribosomal subunit protein uL6 from Rhodospirillum rubrum (strain ATCC 11170 / ATH 1.1.1 / DSM 467 / LMG 4362 / NCIMB 8255 / S1).